Reading from the N-terminus, the 883-residue chain is Phosphoenolpyruvate carboxylase (883 aa).

Catalysis depends on residues histidine 138 and lysine 546.

The protein belongs to the PEPCase type 1 family. The cofactor is Mg(2+).

It catalyses the reaction oxaloacetate + phosphate = phosphoenolpyruvate + hydrogencarbonate. Forms oxaloacetate, a four-carbon dicarboxylic acid source for the tricarboxylic acid cycle. The chain is Phosphoenolpyruvate carboxylase from Shigella dysenteriae serotype 1 (strain Sd197).